The sequence spans 2228 residues: Genome polyprotein (2228 aa).

The interval 55–76 (TAEVGSHQPEPLKTSVDKPGSK) is disordered. 2 consecutive short sequence motifs ((L)YPX(n)L motif) follow at residues 167 to 171 (YPHGL) and 200 to 205 (YPVWEL). The involved in P1-2A pentamerization stretch occupies residues 766-836 (MMDRIALGDL…PRKIKGVFSQ (71 aa)). A helical transmembrane segment spans residues 1011 to 1031 (TVEIINTVLCFVKSGILLYVI). The segment at 1043–1070 (IGLLRVMNYADIGCSVISCGKVFSKMLE) is membrane-penetrating ability. The stretch at 1127–1153 (NKKDVLNILKDHQQKIERAIEEADNFC) forms a coiled coil. An SF3 helicase domain is found at 1204-1366 (HQKLKNLGSI…SFFKNPHNDM (163 aa)). 1230–1237 (GKRGGGKS) lines the ATP pocket. Residues 1462–1482 (WVAVGAAVGVLGVLVGGWYVY) traverse the membrane as a helical segment. At tyrosine 1499 the chain carries O-(5'-phospho-RNA)-tyrosine. Residues 1514 to 1728 (DPVESQSTLE…VAKLVTQEMF (215 aa)) enclose the Peptidase C3 domain. Residues histidine 1563, aspartate 1603, and cysteine 1691 each act as for protease 3C activity in the active site. The RdRp catalytic domain occupies 1977–2098 (DVGLDLDFSA…VFSRQVQIDN (122 aa)).

Belongs to the picornaviridae polyprotein family. As to quaternary structure, homodimer. Homomultimer; probably interacts with membranes in a multimeric form. Seems to assemble into amyloid-like fibers. Homodimer. Monomer. Interacts with protein 3CD. In terms of assembly, interacts with host ACBD3. As to quaternary structure, interacts with protein 3AB. Interacts with human MAVS. In terms of assembly, homodimer; disulfide-linked. As to quaternary structure, homopentamer. Homooligomer. Interacts with capsid protein VP2. Interacts with capsid protein VP3. In terms of assembly, interacts with capsid protein VP1. Interacts with capsid protein VP3. As to quaternary structure, interacts with capsid protein VP1. Interacts with capsid protein VP2. Post-translationally, specific enzymatic cleavages by viral protease in vivo yield a variety of precursors and mature proteins. Polyprotein processing intermediates are produced, such as P1-2A which is a functional precursor of the structural proteins, VP0 which is a VP4-VP2 precursor, VP1-2A precursor, 3ABC precursor which is a stable and catalytically active precursor of 3A, 3B and 3C proteins, 3AB and 3CD precursors. The assembly signal 2A is removed from VP1-2A by a host protease, possibly host Cathepsin L. This cleavage occurs over a region of 3 amino-acids probably generating VP1 proteins with heterogeneous C-termini. During virion maturation, immature virions are rendered infectious following cleavage of VP0 into VP4 and VP2. This maturation seems to be an autocatalytic event triggered by the presence of RNA in the capsid and is followed by a conformational change of the particle. In terms of processing, the assembly signal 2A is removed from VP1-2A by a host protease, possibly host Cathepsin L in naked virions. This cleavage does not occur in enveloped virions. This cleavage occurs over a region of 3 amino-acids probably generating VP1 proteins with heterogeneous C-termini. Post-translationally, VPg is uridylylated prior to priming replication into VPg-pUpU. Unlike other picornaviruses, does not seem to be myristoylated.

Its subcellular location is the virion. The protein localises to the host endosome. It is found in the host multivesicular body. The protein resides in the host membrane. It localises to the host mitochondrion outer membrane. Its subcellular location is the host cytoplasm. The protein localises to the host cytoplasmic vesicle membrane. The enzyme catalyses RNA(n) + a ribonucleoside 5'-triphosphate = RNA(n+1) + diphosphate. It catalyses the reaction a ribonucleoside 5'-triphosphate + H2O = a ribonucleoside 5'-diphosphate + phosphate + H(+). The catalysed reaction is Selective cleavage of Gln-|-Gly bond in the poliovirus polyprotein. In other picornavirus reactions Glu may be substituted for Gln, and Ser or Thr for Gly.. Its function is as follows. Capsid proteins VP1, VP2, and VP3 form a closed capsid enclosing the viral positive strand RNA genome. All these proteins contain a beta-sheet structure called beta-barrel jelly roll. Together they form an icosahedral capsid (T=3) composed of 60 copies of each VP1, VP2, and VP3, with a diameter of approximately 300 Angstroms. VP1 is situated at the 12 fivefold axes, whereas VP2 and VP3 are located at the quasi-sixfold axes. The naked capsid interacts with the host receptor HAVCR1 to provide virion attachment to and probably entry into the target cell. Functionally, VP0 precursor is a component of the immature procapsids. Plays a role in the assembly of the 12 pentamers into an icosahedral structure. Has not been detected in mature virions, supposedly owing to its small size. In terms of biological role, precursor component of immature procapsids that corresponds to an extended form of the structural protein VP1. After maturation, possibly by the host Cathepsin L, the assembly signal 2A is cleaved to give rise to the mature VP1 protein. Its function is as follows. Functions as a viroporin. Affects membrane integrity and causes an increase in membrane permeability. Involved in host intracellular membrane rearrangements probably to give rise to the viral factories. Does not disrupt calcium homeostasis or glycoprotein trafficking. Antagonizes the innate immune response of the host by suppressing IFN-beta synthesis, which it achieves by interfering with the RIG-I/IFIH1 pathway. Functionally, affects membrane integrity and causes an increase in membrane permeability. Associates with and induces structural rearrangements of intracellular membranes. Displays RNA-binding activity. In terms of biological role, the precursor 3ABC is targeted to the mitochondrial membrane where protease 3C activity cleaves and inhibits the host antiviral protein MAVS, thereby disrupting activation of IRF3 through the IFIH1/MDA5 pathway. In vivo, the protease activity of 3ABC precursor is more efficient in cleaving the 2BC precursor than that of protein 3C. The 3ABC precursor may therefore play a role in the proteolytic processing of the polyprotein. Possible viroporin. Its function is as follows. Interacts with the 3CD precursor and with RNA structures found at both the 5'- and 3'-termini of the viral genome. Since the 3AB precursor contains the hydrophobic domain 3A, it probably anchors the whole viral replicase complex to intracellular membranes on which viral RNA synthesis occurs. Functionally, may serve as membrane anchor to the 3AB and 3ABC precursors via its hydrophobic domain. May interact with RNA. Acts as a primer for viral RNA replication and remains covalently bound to viral genomic RNA. VPg is uridylylated prior to priming replication into VPg-pUpU. The VPg-pUpU is then used as primer on the genomic RNA poly(A) by the RNA-dependent RNA polymerase to replicate the viral genome. In terms of biological role, cysteine protease that generates mature viral proteins from the precursor polyprotein. In addition to its proteolytic activity, it binds to viral RNA, and thus influences viral genome replication. RNA and substrate bind cooperatively to the protease. Cleaves IKBKG/NEMO to impair innate immune signaling. Cleaves host PABPC1 which may participate in the switch of viral translation to RNA synthesis. Its function is as follows. Interacts with the 3AB precursor and with RNA structures found at both the 5'- and 3'-termini of the viral genome. Disrupts TLR3 signaling by degrading the host adapter protein TICAM1/TRIF. Functionally, RNA-directed RNA polymerase 3D-POL replicates genomic and antigenomic RNA by recognizing replications specific signals. The protein is Genome polyprotein of Human hepatitis A virus genotype IIIA (isolate NOR-21) (HHAV).